The chain runs to 239 residues: Lipoprotein-releasing system ATP-binding protein LolD (239 aa).

In terms of domain architecture, ABC transporter spans 14–239 (IRAERLGKTY…KLRELAPSAV (226 aa)). Residue 50 to 57 (GASGAGKS) participates in ATP binding.

This sequence belongs to the ABC transporter superfamily. Lipoprotein translocase (TC 3.A.1.125) family. The complex is composed of two ATP-binding proteins (LolD) and two transmembrane proteins (LolC and LolE).

Its subcellular location is the cell inner membrane. Its function is as follows. Part of the ABC transporter complex LolCDE involved in the translocation of mature outer membrane-directed lipoproteins, from the inner membrane to the periplasmic chaperone, LolA. Responsible for the formation of the LolA-lipoprotein complex in an ATP-dependent manner. This chain is Lipoprotein-releasing system ATP-binding protein LolD, found in Xanthomonas campestris pv. campestris (strain 8004).